The sequence spans 32 residues: Photosystem II reaction center protein Z (32 aa).

Residues 12–32 (FGAAAWIGLVLLVGTLYYFVV) form a helical membrane-spanning segment.

It belongs to the PsbZ family. In terms of assembly, PSII is composed of 1 copy each of membrane proteins PsbA, PsbB, PsbC, PsbD, PsbE, PsbF, PsbH, PsbI, PsbJ, PsbK, PsbL, PsbM, PsbT, PsbY, PsbZ, Psb30/Ycf12, at least 3 peripheral proteins of the oxygen-evolving complex and a large number of cofactors. It forms dimeric complexes.

The protein localises to the plastid. Its subcellular location is the chloroplast thylakoid membrane. Its function is as follows. May control the interaction of photosystem II (PSII) cores with the light-harvesting antenna, regulates electron flow through the 2 photosystem reaction centers. PSII is a light-driven water plastoquinone oxidoreductase, using light energy to abstract electrons from H(2)O, generating a proton gradient subsequently used for ATP formation. This is Photosystem II reaction center protein Z from Euglena granulata.